We begin with the raw amino-acid sequence, 156 residues long: Arginine repressor (156 aa).

The protein belongs to the ArgR family.

The protein resides in the cytoplasm. It participates in amino-acid biosynthesis; L-arginine biosynthesis [regulation]. In terms of biological role, regulates arginine biosynthesis genes. This Salmonella paratyphi C (strain RKS4594) protein is Arginine repressor.